The chain runs to 47 residues: Turripeptide Ici9.1 (47 aa).

Intrachain disulfides connect cysteine 1–cysteine 31, cysteine 5–cysteine 24, and cysteine 13–cysteine 45. One can recognise a Kazal-like domain in the interval 1–47 (CLSVCSMEYWPVCGSDGKTYPNECHLTSEACMSNTDITVAHVGKCDQ).

The protein belongs to the conopeptide P-like superfamily. As to expression, expressed by the venom duct.

The protein resides in the secreted. Its function is as follows. Acts as a neurotoxin by inhibiting an ion channel. May also act as a serine protease inhibitor, since it possess the kazal serine protease inhibitor signature. The protein is Turripeptide Ici9.1 of Iotyrris cingulifera (Sea snail).